The primary structure comprises 413 residues: MPFMTASSPSLLQRLKSLSLVTQILIGLIAGIALALFAPEAAKGTAFIGKVFVSALKAVAPILVFVLVMASIANHKHGQETHIRPILFLYLLGTFAAAVVAVIASMMFPSHLVLSTDNIAVSAPGGISEVLQSLLLSVVDNPVSALMNANFIGILAWAIGMGVAIRHAGDTTREVLGDLSNGVTVIVRVVIRFAPLGIFGLVASTLATSGFGALIGYAHLLAVLLGCMLFVALVMNPLIVFWKLRRNPYPLTLQCLRESGITAFFTRSSAANIPVNLELSKRLGLHEDTYSVSIPLGATINMAGAAITITVLSLAAVHTLGIAVDIPTAILLSVVAAICACGASGVAGGSLLLIPLACSLFGIPSEIAMQVVAVGFIIGVLQDSAETALNSSTDVLFTAAACLGEEQKAQRPA.

Helical transmembrane passes span 18–38, 52–72, 86–106, 119–139, 145–165, 196–216, 221–241, 292–312, 320–340, and 360–380; these read LSLV…ALFA, FVSA…MASI, ILFL…IASM, IAVS…LSVV, ALMN…GVAI, LGIF…ALIG, LAVL…LIVF, VSIP…ITVL, LGIA…AICA, and LFGI…IIGV.

It belongs to the dicarboxylate/amino acid:cation symporter (DAACS) (TC 2.A.23) family.

It is found in the cell inner membrane. The catalysed reaction is L-serine(in) + Na(+)(in) = L-serine(out) + Na(+)(out). It catalyses the reaction L-threonine(in) + Na(+)(in) = L-threonine(out) + Na(+)(out). In terms of biological role, involved in the import of serine and threonine into the cell, with the concomitant import of sodium (symport system). The protein is Serine/threonine transporter SstT of Pseudomonas fluorescens (strain Pf0-1).